A 55-amino-acid chain; its full sequence is Large ribosomal subunit protein bL32 (55 aa).

The protein belongs to the bacterial ribosomal protein bL32 family.

This is Large ribosomal subunit protein bL32 from Aeromonas hydrophila subsp. hydrophila (strain ATCC 7966 / DSM 30187 / BCRC 13018 / CCUG 14551 / JCM 1027 / KCTC 2358 / NCIMB 9240 / NCTC 8049).